We begin with the raw amino-acid sequence, 115 residues long: NAD(P)H-quinone oxidoreductase subunit M, organellar chromatophore (115 aa).

Belongs to the complex I NdhM subunit family. In terms of assembly, NDH-1 can be composed of about 15 different subunits; different subcomplexes with different compositions have been identified which probably have different functions.

Its subcellular location is the plastid. It localises to the organellar chromatophore thylakoid membrane. The catalysed reaction is a plastoquinone + NADH + (n+1) H(+)(in) = a plastoquinol + NAD(+) + n H(+)(out). It catalyses the reaction a plastoquinone + NADPH + (n+1) H(+)(in) = a plastoquinol + NADP(+) + n H(+)(out). In terms of biological role, NDH-1 shuttles electrons from an unknown electron donor, via FMN and iron-sulfur (Fe-S) centers, to quinones in the respiratory and/or the photosynthetic chain. The immediate electron acceptor for the enzyme in this species is believed to be plastoquinone. Couples the redox reaction to proton translocation, and thus conserves the redox energy in a proton gradient. This is NAD(P)H-quinone oxidoreductase subunit M, organellar chromatophore from Paulinella chromatophora.